The sequence spans 267 residues: Thiazole synthase (267 aa).

The Schiff-base intermediate with DXP role is filled by Lys110. Residues Gly171, 197–198 (AG), and 219–220 (NT) contribute to the 1-deoxy-D-xylulose 5-phosphate site.

Belongs to the ThiG family. In terms of assembly, homotetramer. Forms heterodimers with either ThiH or ThiS.

The protein localises to the cytoplasm. It carries out the reaction [ThiS sulfur-carrier protein]-C-terminal-Gly-aminoethanethioate + 2-iminoacetate + 1-deoxy-D-xylulose 5-phosphate = [ThiS sulfur-carrier protein]-C-terminal Gly-Gly + 2-[(2R,5Z)-2-carboxy-4-methylthiazol-5(2H)-ylidene]ethyl phosphate + 2 H2O + H(+). It functions in the pathway cofactor biosynthesis; thiamine diphosphate biosynthesis. In terms of biological role, catalyzes the rearrangement of 1-deoxy-D-xylulose 5-phosphate (DXP) to produce the thiazole phosphate moiety of thiamine. Sulfur is provided by the thiocarboxylate moiety of the carrier protein ThiS. In vitro, sulfur can be provided by H(2)S. The polypeptide is Thiazole synthase (Maricaulis maris (strain MCS10) (Caulobacter maris)).